Consider the following 250-residue polypeptide: uncharacterized protein (250 aa).

This is an uncharacterized protein from Mycobacterium tuberculosis (strain CDC 1551 / Oshkosh).